The following is a 104-amino-acid chain: Ig lambda-1 chain C region (104 aa).

An Ig-like domain is found at 6–99 (PSVTLFPPSS…EENTVEKSLS (94 aa)). A disulfide bridge connects residues Cys-27 and Cys-85.

This is Ig lambda-1 chain C region from Rattus norvegicus (Rat).